A 456-amino-acid polypeptide reads, in one-letter code: Methylenetetrahydrofolate--tRNA-(uracil-5-)-methyltransferase TrmFO (456 aa).

11 to 16 (GGGLAG) lines the FAD pocket.

Belongs to the MnmG family. TrmFO subfamily. FAD serves as cofactor.

Its subcellular location is the cytoplasm. It carries out the reaction uridine(54) in tRNA + (6R)-5,10-methylene-5,6,7,8-tetrahydrofolate + NADH + H(+) = 5-methyluridine(54) in tRNA + (6S)-5,6,7,8-tetrahydrofolate + NAD(+). The catalysed reaction is uridine(54) in tRNA + (6R)-5,10-methylene-5,6,7,8-tetrahydrofolate + NADPH + H(+) = 5-methyluridine(54) in tRNA + (6S)-5,6,7,8-tetrahydrofolate + NADP(+). Functionally, catalyzes the folate-dependent formation of 5-methyl-uridine at position 54 (M-5-U54) in all tRNAs. This is Methylenetetrahydrofolate--tRNA-(uracil-5-)-methyltransferase TrmFO from Synechocystis sp. (strain ATCC 27184 / PCC 6803 / Kazusa).